The primary structure comprises 314 residues: MEFTDRNYTLVTEFILLGFPTRPELQIVLFLMFLTLYAIILIGNIGLMLLIRIDPHLQTPMYFFLSNLSFVDLCYFSDIVPKMLVNFLSENKSISYYGCALQFYFFCTFADTESFILAAMAYDRYVAICNPLLYTVVMSRGICMRLIVLSYLGGNMSSLVHTSFAFILKYCDKNVINHFFCDLPPLLKLSCTDTTINEWLLSTYGSSVEIICFIIIIISYFFILLSVLKIRSFSGRKKTFSTCASHLTSVTIYQGTLLFIYSRPSYLYSPNTDKIISVFYTIFIPVLNPLIYSLRNKDVKDAAEKVLRSKVDSS.

The Extracellular segment spans residues Met1–Ile27. The N-linked (GlcNAc...) asparagine glycan is linked to Asn7. Residues Val28 to Met48 form a helical membrane-spanning segment. Over Leu49–His56 the chain is Cytoplasmic. A helical transmembrane segment spans residues Leu57 to Ser77. Over Asp78 to Leu101 the chain is Extracellular. A disulfide bond links Cys99 and Cys191. Residues Gln102–Tyr122 traverse the membrane as a helical segment. At Asp123–Gly141 the chain is on the cytoplasmic side. Residues Ile142–Thr162 form a helical membrane-spanning segment. Residues Ser163–Glu198 are Extracellular-facing. A helical membrane pass occupies residues Trp199–Ser219. Over Tyr220 to Thr239 the chain is Cytoplasmic. Residues Phe240–Ile260 traverse the membrane as a helical segment. Over Tyr261–Asp273 the chain is Extracellular. The helical transmembrane segment at Lys274 to Leu294 threads the bilayer. Over Arg295 to Ser314 the chain is Cytoplasmic.

Belongs to the G-protein coupled receptor 1 family.

Its subcellular location is the cell membrane. Its function is as follows. Odorant receptor. In Homo sapiens (Human), this protein is Olfactory receptor 5I1 (OR5I1).